We begin with the raw amino-acid sequence, 216 residues long: Large ribosomal subunit protein uL1z (216 aa).

This sequence belongs to the universal ribosomal protein uL1 family. In terms of assembly, interacts with the GTPase NUG2.

The polypeptide is Large ribosomal subunit protein uL1z (RPL10AA) (Arabidopsis thaliana (Mouse-ear cress)).